A 226-amino-acid chain; its full sequence is Probable proteasome subunit beta type-7 (226 aa).

This sequence belongs to the peptidase T1B family. As to quaternary structure, the 26S proteasome consists of a 20S proteasome core and two 19S regulatory subunits. The 20S proteasome core is composed of 28 subunits that are arranged in four stacked rings, resulting in a barrel-shaped structure. The two end rings are each formed by seven alpha subunits, and the two central rings are each formed by seven beta subunits. The catalytic chamber with the active sites is on the inside of the barrel.

It is found in the cytoplasm. Its subcellular location is the nucleus. Functionally, non-catalytic component of the proteasome which degrades poly-ubiquitinated proteins in the cytoplasm and in the nucleus. It is essential for the regulated turnover of proteins and for the removal of misfolded proteins. The proteasome is a multicatalytic proteinase complex that is characterized by its ability to cleave peptides with Arg, Phe, Tyr, Leu, and Glu adjacent to the leaving group at neutral or slightly basic pH. It has an ATP-dependent proteolytic activity. The sequence is that of Probable proteasome subunit beta type-7 (PRE4) from Encephalitozoon cuniculi (strain GB-M1) (Microsporidian parasite).